The following is a 20-amino-acid chain: Protease inhibitor (20 aa).

In terms of assembly, monomer. Post-translationally, glycosylated. In terms of tissue distribution, stored in epidermis and secreted into the hemolymph and cuticle. Not detected in the interior of the epidermis, fat body cells or columnar or goblet cells of the midgut epithelium (at protein level).

Its function is as follows. Inhibits trypsin and chymotrypsin. In Antheraea mylitta (Tasar silkworm), this protein is Protease inhibitor.